Here is a 138-residue protein sequence, read N- to C-terminus: Acidic phospholipase A2 Cvv-E6a (138 aa).

An N-terminal signal peptide occupies residues 1–16 (MRTLWIVAVLLLGVEG). Cystine bridges form between cysteine 42–cysteine 131, cysteine 44–cysteine 60, cysteine 59–cysteine 111, cysteine 65–cysteine 138, cysteine 66–cysteine 104, cysteine 73–cysteine 97, and cysteine 91–cysteine 102. The Ca(2+) site is built by tyrosine 43, glycine 45, and glycine 47. Histidine 63 is a catalytic residue. Residue aspartate 64 participates in Ca(2+) binding. The active site involves aspartate 105.

The protein belongs to the phospholipase A2 family. Group II subfamily. D49 sub-subfamily. Ca(2+) is required as a cofactor. In terms of tissue distribution, expressed by the venom gland.

Its subcellular location is the secreted. It carries out the reaction a 1,2-diacyl-sn-glycero-3-phosphocholine + H2O = a 1-acyl-sn-glycero-3-phosphocholine + a fatty acid + H(+). In terms of biological role, snake venom phospholipase A2 (PLA2) that significantly inhibits ADP-induced platelet aggregation in platelet-rich plasma of human, rabbit and guinea pig. PLA2 catalyzes the calcium-dependent hydrolysis of the 2-acyl groups in 3-sn-phosphoglycerides. This is Acidic phospholipase A2 Cvv-E6a from Crotalus viridis viridis (Prairie rattlesnake).